The sequence spans 460 residues: Bifunctional protein GlmU (460 aa).

The tract at residues 1–229 (MTNYAIILAA…FNESLGVNDR (229 aa)) is pyrophosphorylase. UDP-N-acetyl-alpha-D-glucosamine contacts are provided by residues 8–11 (LAAG), K22, Q72, and 77–78 (GT). D102 serves as a coordination point for Mg(2+). UDP-N-acetyl-alpha-D-glucosamine-binding residues include G139, E154, N169, and N227. Position 227 (N227) interacts with Mg(2+). Residues 230 to 250 (VALATAETVMRQRITQKHMVN) form a linker region. Residues 251–460 (GVTFQNPETV…RLAHHPSRSK (210 aa)) are N-acetyltransferase. The UDP-N-acetyl-alpha-D-glucosamine site is built by R332 and K350. H362 (proton acceptor) is an active-site residue. UDP-N-acetyl-alpha-D-glucosamine is bound by residues Y365 and N376. Acetyl-CoA-binding positions include A379, 385–386 (NY), S404, A422, and R439.

The protein in the N-terminal section; belongs to the N-acetylglucosamine-1-phosphate uridyltransferase family. In the C-terminal section; belongs to the transferase hexapeptide repeat family. Homotrimer. Mg(2+) serves as cofactor.

The protein resides in the cytoplasm. The enzyme catalyses alpha-D-glucosamine 1-phosphate + acetyl-CoA = N-acetyl-alpha-D-glucosamine 1-phosphate + CoA + H(+). It catalyses the reaction N-acetyl-alpha-D-glucosamine 1-phosphate + UTP + H(+) = UDP-N-acetyl-alpha-D-glucosamine + diphosphate. The protein operates within nucleotide-sugar biosynthesis; UDP-N-acetyl-alpha-D-glucosamine biosynthesis; N-acetyl-alpha-D-glucosamine 1-phosphate from alpha-D-glucosamine 6-phosphate (route II): step 2/2. It functions in the pathway nucleotide-sugar biosynthesis; UDP-N-acetyl-alpha-D-glucosamine biosynthesis; UDP-N-acetyl-alpha-D-glucosamine from N-acetyl-alpha-D-glucosamine 1-phosphate: step 1/1. It participates in bacterial outer membrane biogenesis; LPS lipid A biosynthesis. Its function is as follows. Catalyzes the last two sequential reactions in the de novo biosynthetic pathway for UDP-N-acetylglucosamine (UDP-GlcNAc). The C-terminal domain catalyzes the transfer of acetyl group from acetyl coenzyme A to glucosamine-1-phosphate (GlcN-1-P) to produce N-acetylglucosamine-1-phosphate (GlcNAc-1-P), which is converted into UDP-GlcNAc by the transfer of uridine 5-monophosphate (from uridine 5-triphosphate), a reaction catalyzed by the N-terminal domain. In Streptococcus pyogenes serotype M28 (strain MGAS6180), this protein is Bifunctional protein GlmU.